Here is a 1270-residue protein sequence, read N- to C-terminus: DNA-directed RNA polymerase subunit beta (1270 aa).

The protein belongs to the RNA polymerase beta chain family. The RNAP catalytic core consists of 2 alpha, 1 beta, 1 beta' and 1 omega subunit. When a sigma factor is associated with the core the holoenzyme is formed, which can initiate transcription.

The enzyme catalyses RNA(n) + a ribonucleoside 5'-triphosphate = RNA(n+1) + diphosphate. DNA-dependent RNA polymerase catalyzes the transcription of DNA into RNA using the four ribonucleoside triphosphates as substrates. This is DNA-directed RNA polymerase subunit beta from Flavobacterium johnsoniae (strain ATCC 17061 / DSM 2064 / JCM 8514 / BCRC 14874 / CCUG 350202 / NBRC 14942 / NCIMB 11054 / UW101) (Cytophaga johnsonae).